Consider the following 856-residue polypeptide: Rod cGMP-specific 3',5'-cyclic phosphodiesterase subunit beta (856 aa).

N-acetylserine is present on Ser-2. GAF domains follow at residues 71 to 220 and 252 to 429; these read NMER…TLNL and DIER…GWSV. A PDEase domain is found at 481–814; it reads EEDELGKILK…KEWKALADEY (334 aa). The active-site Proton donor is His-557. A divalent metal cation is bound by residues His-561, His-597, Asp-598, and Asp-718. Cys-853 carries the S-geranylgeranyl cysteine lipid modification. The propeptide at 854–856 is removed in mature form; sequence CIL.

This sequence belongs to the cyclic nucleotide phosphodiesterase family. As to quaternary structure, oligomer composed of two catalytic chains (alpha and beta), an inhibitory chain (gamma) and the delta chain. A divalent metal cation serves as cofactor.

Its subcellular location is the membrane. It localises to the cell projection. The protein localises to the cilium. The protein resides in the photoreceptor outer segment. It carries out the reaction 3',5'-cyclic GMP + H2O = GMP + H(+). Functionally, rod-specific cGMP phosphodiesterase that catalyzes the hydrolysis of 3',5'-cyclic GMP. Necessary for the formation of a functional phosphodiesterase holoenzyme. Involved in retinal circadian rhythm photoentrainment via modulation of UVA and orange light-induced phase-shift of the retina clock. May participate in processes of transmission and amplification of the visual signal. In Mus musculus (Mouse), this protein is Rod cGMP-specific 3',5'-cyclic phosphodiesterase subunit beta.